Here is a 34-residue protein sequence, read N- to C-terminus: Phalloidin proprotein (34 aa).

A propeptide spanning residues 1-10 is cleaved from the precursor; the sequence is MSDINASRLP. The segment at residues 11 to 17 is a cross-link (cyclopeptide (Ala-Pro)); it reads AWLATCP. A cross-link (2'-cysteinyl-6'-hydroxytryptophan sulfoxide (Trp-Cys)) is located at residues 12 to 16; sequence WLATC. Positions 18–34 are excised as a propeptide; the sequence is CVGDDVNPTLSRGESLC.

It belongs to the MSDIN fungal toxin family. In terms of processing, processed by the macrocyclase-peptidase enzyme POPB to yield a toxic cyclic heptapeptide. POPB first removes 10 residues from the N-terminus. Conformational trapping of the remaining peptide forces the enzyme to release this intermediate rather than proceed to macrocyclization. The enzyme rebinds the remaining peptide in a different conformation and catalyzes macrocyclization of the N-terminal 7 residues.

In terms of biological role, toxin that belongs to the bicyclic heptapeptides called phallotoxins. Although structurally related to amatoxins, phallotoxins have a different mode of action, which is the stabilization of F-actin. Phallotoxins are poisonous when administered parenterally, but not orally because of poor absorption. The sequence is that of Phalloidin proprotein from Amanita phalloides (Death cap).